Here is a 369-residue protein sequence, read N- to C-terminus: MFGNGQTGQRLPAMASPPHDSYYSQSLASSRSRNNSDAMDIYAITDRDPPAREPSGYSQWYRNGSPSVNSIHSKSSEKQPFYEENGRMYHAYRKGVYMLPCDEQEQDRLDIFHKLFTVARVSDGLMYAPHPRNGRFLDLGCGTGIWAIDVANKYPDAFVVGVDLAPIQPSNHPKNCEFYAPFDFESPWAMGEDSWDLIHLQMGCGSVMGWPNLYRRIFAHLRPGAWFEQVEIDFEPRCDDRPLEGLAIRQWYQYLKQATQDAMRPINHNSRDTIRDLQEAGFTDIDHQMVGLPLNPWHQDEHERKVARWYNLAVSESIESLSMAPFSRIFNWDLDRIRRISSEVKSEAFNKEIHAYNILHIYQARKPAN.

Residues 1 to 37 form a disordered region; sequence MFGNGQTGQRLPAMASPPHDSYYSQSLASSRSRNNSD. Low complexity predominate over residues 20–37; the sequence is DSYYSQSLASSRSRNNSD.

Belongs to the methyltransferase superfamily. LaeA methyltransferase family. As to quaternary structure, component of the heterotrimeric velvet complex composed of laeA, veA and velB; VeA acting as a bridging protein between laeA and velB. Interacts directly with veA.

It is found in the nucleus. The enzyme catalyses L-methionyl-[protein] + S-adenosyl-L-methionine = S-methyl-L-methionyl-[protein] + S-adenosyl-L-homocysteine. Methyltransferase that performs automethylation. No other methyl-accepting substrate has been identified yet. Component of the velvet transcription factor complex that acts as a global regulator for secondary metabolite gene expression. Required for aflR expression and subsequent aflatoxin production. Negatively regulates veA expression. Controls conidiophore and conidial development. Required for hydrophobin production which plays a role in cell surface hydrophobicity and host defense escape. The chain is Secondary metabolism regulator laeA from Aspergillus flavus (strain ATCC 200026 / FGSC A1120 / IAM 13836 / NRRL 3357 / JCM 12722 / SRRC 167).